The following is a 422-amino-acid chain: Enolase (422 aa).

(2R)-2-phosphoglycerate is bound at residue Q161. E203 acts as the Proton donor in catalysis. 3 residues coordinate Mg(2+): D240, E283, and D310. Residues K335, R364, S365, and K386 each coordinate (2R)-2-phosphoglycerate. Catalysis depends on K335, which acts as the Proton acceptor.

The protein belongs to the enolase family. It depends on Mg(2+) as a cofactor.

Its subcellular location is the cytoplasm. The protein resides in the secreted. The protein localises to the cell surface. The catalysed reaction is (2R)-2-phosphoglycerate = phosphoenolpyruvate + H2O. It participates in carbohydrate degradation; glycolysis; pyruvate from D-glyceraldehyde 3-phosphate: step 4/5. Functionally, catalyzes the reversible conversion of 2-phosphoglycerate (2-PG) into phosphoenolpyruvate (PEP). It is essential for the degradation of carbohydrates via glycolysis. This is Enolase from Deinococcus deserti (strain DSM 17065 / CIP 109153 / LMG 22923 / VCD115).